A 606-amino-acid polypeptide reads, in one-letter code: Glutamine--fructose-6-phosphate aminotransferase [isomerizing] (606 aa).

Residue Cys-2 is the Nucleophile; for GATase activity of the active site. Residues 2-217 form the Glutamine amidotransferase type-2 domain; that stretch reads CGIVGMVGEN…DGDVMVLRKD (216 aa). SIS domains are found at residues 284–423 and 455–596; these read YEEL…INGY and LSEK…PDKP. Residue Lys-601 is the For Fru-6P isomerization activity of the active site.

As to quaternary structure, homodimer.

Its subcellular location is the cytoplasm. The catalysed reaction is D-fructose 6-phosphate + L-glutamine = D-glucosamine 6-phosphate + L-glutamate. In terms of biological role, catalyzes the first step in hexosamine metabolism, converting fructose-6P into glucosamine-6P using glutamine as a nitrogen source. The sequence is that of Glutamine--fructose-6-phosphate aminotransferase [isomerizing] from Thermotoga maritima (strain ATCC 43589 / DSM 3109 / JCM 10099 / NBRC 100826 / MSB8).